Here is a 472-residue protein sequence, read N- to C-terminus: Radical SAM cyclopropyl synthase TigE (472 aa).

Residues 106–331 (GEQIKAIQLV…VIDLYEYGLD (226 aa)) form the Radical SAM core domain. [4Fe-4S] cluster contacts are provided by cysteine 120, cysteine 124, cysteine 127, tyrosine 339, cysteine 360, cysteine 378, cysteine 414, cysteine 417, cysteine 423, cysteine 427, and cysteine 446.

It belongs to the radical SAM superfamily. [4Fe-4S] cluster serves as cofactor.

It catalyses the reaction L-isoleucyl-[protein] + AH2 + 2 S-adenosyl-L-methionine = methylcyclopropylglycine-[protein] + 2 5'-deoxyadenosine + 2 L-methionine + A + 2 H(+). In terms of biological role, radical S-adenosylmethionine (SAM) enzyme that catalyzes the formation of methylcyclopropylglycine (mCPG) residues from isoleucine residues residing in the repeating TIGSVS motif of the precursor peptide TigB. Is thus involved in the maturation of a ribosomally synthesized and post-translationally modified peptide (RiPP). The sequence is that of Radical SAM cyclopropyl synthase TigE from Paramaledivibacter caminithermalis (strain DSM 15212 / CIP 107654 / DViRD3) (Clostridium caminithermale).